A 417-amino-acid polypeptide reads, in one-letter code: Snake venom metalloproteinase aculysin-1 (417 aa).

An N-terminal signal peptide occupies residues 1-20 (MIQVLLVTICLAAFPYQGSS). Positions 21–189 (IMLESGKVND…KKPSWLNLTP (169 aa)) are excised as a propeptide. In terms of domain architecture, Peptidase M12B spans 197-392 (TSVNLQLIVD…KKPKCIHKKS (196 aa)). 3 cysteine pairs are disulfide-bonded: Cys-308/Cys-387, Cys-349/Cys-371, and Cys-351/Cys-354. Residue His-333 participates in Zn(2+) binding. Glu-334 is a catalytic residue. Residues His-337 and His-343 each contribute to the Zn(2+) site. A propeptide spanning residues 393–417 (LKTDTVSTSVSGNEPLDDNVDGFHA) is cleaved from the precursor. The tract at residues 398-417 (VSTSVSGNEPLDDNVDGFHA) is disordered. Residues 407 to 417 (PLDDNVDGFHA) show a composition bias toward acidic residues.

The protein belongs to the venom metalloproteinase (M12B) family. P-I subfamily. In terms of assembly, monomer. The cofactor is Zn(2+). As to expression, expressed by the venom gland.

The protein resides in the secreted. In terms of biological role, this protein is an alkaline zinc metalloprotease from snake venom that possesses weak hemorrhagic activity. In Deinagkistrodon acutus (Hundred-pace snake), this protein is Snake venom metalloproteinase aculysin-1.